Consider the following 608-residue polypeptide: Fatty acid amide hydrolase (608 aa).

Catalysis depends on charge relay system residues K206 and S282. 303–306 (GGGS) contributes to the substrate binding site. Residue S306 is the Acyl-ester intermediate of the active site.

This sequence belongs to the amidase family. In terms of assembly, forms homodimers.

The protein resides in the endoplasmic reticulum membrane. Its subcellular location is the cell membrane. The enzyme catalyses N-(9Z,12Z-octadecadienoyl)-ethanolamine + H2O = ethanolamine + (9Z,12Z)-octadecadienoate. It catalyses the reaction N-hexadecanoylethanolamine + H2O = ethanolamine + hexadecanoate. It carries out the reaction N-dodecanoylethanolamine + H2O = dodecanoate + ethanolamine. Its activity is regulated as follows. Inhibited by methyl arachidonyl fluorophosphonate (MAFP). Catalyzes the hydrolysis of bioactive endogenous fatty acid amides to their corresponding acids. The hydrolysis of endogenous amidated lipids terminates their participation as lipid mediators in various signaling systems. Converts a wide range of N-acylethanolamines (NAEs) to their corresponding free fatty acids and ethanolamine. This is Fatty acid amide hydrolase from Oryza sativa subsp. indica (Rice).